Reading from the N-terminus, the 255-residue chain is MLEIGGKTFASRLLLGTGKYPDATTQQQAVEASGTNILTFSVRRLDVFAKGQTNPLAALDLNRYDLLPNTAGAKTAEEAVRLARLARASGMCDMVKVEVIGCDKTLLPDPVETLRASEELIKDGFIVLPYTSDDLLLARRLEELGCHAIMPAASPIGSGQGILNPLALSFIIEQLTVPVIVDAGIGSPADVAYAMELGADAVLLNSAVAHSGDPVKMAQAMKLAVEAGRLGFEAGRIEKKRYATASSPMTGISRP.

Lys96 (schiff-base intermediate with DXP) is an active-site residue. 1-deoxy-D-xylulose 5-phosphate is bound by residues Gly157, 183–184, and 205–206; these read AG and NS.

It belongs to the ThiG family. Homotetramer. Forms heterodimers with either ThiH or ThiS.

Its subcellular location is the cytoplasm. The enzyme catalyses [ThiS sulfur-carrier protein]-C-terminal-Gly-aminoethanethioate + 2-iminoacetate + 1-deoxy-D-xylulose 5-phosphate = [ThiS sulfur-carrier protein]-C-terminal Gly-Gly + 2-[(2R,5Z)-2-carboxy-4-methylthiazol-5(2H)-ylidene]ethyl phosphate + 2 H2O + H(+). The protein operates within cofactor biosynthesis; thiamine diphosphate biosynthesis. Its function is as follows. Catalyzes the rearrangement of 1-deoxy-D-xylulose 5-phosphate (DXP) to produce the thiazole phosphate moiety of thiamine. Sulfur is provided by the thiocarboxylate moiety of the carrier protein ThiS. In vitro, sulfur can be provided by H(2)S. The sequence is that of Thiazole synthase from Exiguobacterium sibiricum (strain DSM 17290 / CCUG 55495 / CIP 109462 / JCM 13490 / 255-15).